Consider the following 29-residue polypeptide: Cytochrome b6-f complex subunit 8 (29 aa).

A helical membrane pass occupies residues 3-23 (MVSLAWAALMVVFTFSLSLVV).

Belongs to the PetN family. As to quaternary structure, the 4 large subunits of the cytochrome b6-f complex are cytochrome b6, subunit IV (17 kDa polypeptide, PetD), cytochrome f and the Rieske protein, while the 4 small subunits are PetG, PetL, PetM and PetN. The complex functions as a dimer.

The protein resides in the plastid. It localises to the chloroplast thylakoid membrane. Its function is as follows. Component of the cytochrome b6-f complex, which mediates electron transfer between photosystem II (PSII) and photosystem I (PSI), cyclic electron flow around PSI, and state transitions. This Cucumis sativus (Cucumber) protein is Cytochrome b6-f complex subunit 8.